We begin with the raw amino-acid sequence, 81 residues long: Large ribosomal subunit protein bL31B (81 aa).

This sequence belongs to the bacterial ribosomal protein bL31 family. Type B subfamily. In terms of assembly, part of the 50S ribosomal subunit.

The protein is Large ribosomal subunit protein bL31B of Listeria innocua serovar 6a (strain ATCC BAA-680 / CLIP 11262).